Reading from the N-terminus, the 387-residue chain is Sorting nexin-7 (387 aa).

The PX domain occupies 30 to 151 (KDLFITVDEP…IFLTAQAWEL (122 aa)). A 1,2-diacyl-sn-glycero-3-phospho-(1D-myo-inositol-3-phosphate) is bound by residues Arg-73, Gln-75, Lys-103, and Arg-117. Residues 178-387 (GVKNRPEEFM…HLEEASEDKP (210 aa)) form the BAR domain.

It belongs to the sorting nexin family. As to quaternary structure, heterodimer; heterodimerizes with SNX4.

The protein resides in the early endosome membrane. In terms of biological role, involved in the regulation of endocytosis and in several stages of intracellular trafficking. Together with SNX4, involved in autophagosome assembly by regulating trafficking and recycling of phospholipid scramblase ATG9A. The chain is Sorting nexin-7 from Homo sapiens (Human).